A 202-amino-acid chain; its full sequence is CASP-like protein 2B1 (202 aa).

Topologically, residues 1–29 (MSYLGVGVSPGNVPVYHGTNLKVVDRRVR) are cytoplasmic. Residues 30-50 (LAELVLRCVICGLGILAAVLV) traverse the membrane as a helical segment. Residues 51-72 (GTDTQVKVIFTIQKKAKFTDMK) are Extracellular-facing. The helical transmembrane segment at 73-93 (ALVFLVIANGIAAAYSLIQGL) threads the bilayer. Residues 94 to 109 (RCVVSMVRGSVLFSKP) are Cytoplasmic-facing. The chain crosses the membrane as a helical span at residues 110–130 (LAWAIFSGDQVIAYLTLAAVA). Over 131-164 (AAAQSSVFGEFGQPELQWMKICNMYGKFCNQVGE) the chain is Extracellular. Residues 165 to 185 (GIVSAVGVSLSMVILSGISAF) traverse the membrane as a helical segment. Over 186 to 202 (SLFRLYGGNKGTSGGRW) the chain is Cytoplasmic.

This sequence belongs to the Casparian strip membrane proteins (CASP) family. As to quaternary structure, homodimer and heterodimers.

It localises to the cell membrane. This chain is CASP-like protein 2B1, found in Vitis vinifera (Grape).